Here is a 128-residue protein sequence, read N- to C-terminus: uncharacterized protein (128 aa).

This is an uncharacterized protein from Haemophilus influenzae (strain ATCC 51907 / DSM 11121 / KW20 / Rd).